A 964-amino-acid polypeptide reads, in one-letter code: A-type ATP synthase subunit A (964 aa).

Positions 392–518 constitute a DOD-type homing endonuclease domain; sequence FLGYLMANGT…LSYLFAKLGI (127 aa).

The protein belongs to the ATPase alpha/beta chains family. Has multiple subunits with at least A(3), B(3), C, D, E, F, H, I and proteolipid K(x). Post-translationally, this protein undergoes a protein self splicing that involves a post-translational excision of the VDE intervening region (intein) followed by peptide ligation.

Its subcellular location is the cell membrane. It carries out the reaction ATP + H2O + 4 H(+)(in) = ADP + phosphate + 5 H(+)(out). In terms of biological role, component of the A-type ATP synthase that produces ATP from ADP in the presence of a proton gradient across the membrane. The A chain is the catalytic subunit. The sequence is that of A-type ATP synthase subunit A from Pyrococcus horikoshii (strain ATCC 700860 / DSM 12428 / JCM 9974 / NBRC 100139 / OT-3).